The sequence spans 235 residues: Dephospho-CoA kinase (235 aa).

The DPCK domain occupies 15–219 (NVGLTGSISC…KKERLQRKSA (205 aa)). 23–28 (SCGKST) is an ATP binding site.

It belongs to the CoaE family.

It is found in the cytoplasm. It carries out the reaction 3'-dephospho-CoA + ATP = ADP + CoA + H(+). It functions in the pathway cofactor biosynthesis; coenzyme A biosynthesis; CoA from (R)-pantothenate: step 5/5. Its function is as follows. Catalyzes the phosphorylation of the 3'-hydroxyl group of dephosphocoenzyme A to form coenzyme A. The polypeptide is Dephospho-CoA kinase (Syntrophus aciditrophicus (strain SB)).